The primary structure comprises 72 residues: Seed trypsin/chymotrypsin inhibitor IVB (72 aa).

Disulfide bonds link cysteine 8-cysteine 61, cysteine 9-cysteine 24, cysteine 12-cysteine 57, cysteine 14-cysteine 22, cysteine 31-cysteine 38, cysteine 35-cysteine 50, and cysteine 40-cysteine 48.

Belongs to the Bowman-Birk serine protease inhibitor family. Seed.

Its function is as follows. Inhibitor of trypsin and of chymotrypsin. May function as a natural phytochemical defense against predators. This chain is Seed trypsin/chymotrypsin inhibitor IVB, found in Pisum sativum (Garden pea).